The sequence spans 151 residues: Transcriptional repressor NrdR (151 aa).

A zinc finger spans residues 3 to 34; it reads CPFCSSDNTRVIDSRPADDNSSIRRRRLCDDC. Positions 49 to 139 constitute an ATP-cone domain; sequence LIVIKKDNNR…VYREFKDVNT (91 aa).

Belongs to the NrdR family. It depends on Zn(2+) as a cofactor.

In terms of biological role, negatively regulates transcription of bacterial ribonucleotide reductase nrd genes and operons by binding to NrdR-boxes. The protein is Transcriptional repressor NrdR of Agathobacter rectalis (strain ATCC 33656 / DSM 3377 / JCM 17463 / KCTC 5835 / VPI 0990) (Eubacterium rectale).